The sequence spans 853 residues: DNA mismatch repair protein MutS (853 aa).

614–621 (GPNMGGKS) contacts ATP.

The protein belongs to the DNA mismatch repair MutS family.

Its function is as follows. This protein is involved in the repair of mismatches in DNA. It is possible that it carries out the mismatch recognition step. This protein has a weak ATPase activity. The polypeptide is DNA mismatch repair protein MutS (Enterobacter sp. (strain 638)).